The sequence spans 334 residues: Glycerol-3-phosphate dehydrogenase [NAD(P)+] (334 aa).

NADPH contacts are provided by Ser-14, Tyr-15, His-35, and Lys-109. Positions 109, 138, and 140 each coordinate sn-glycerol 3-phosphate. NADPH is bound at residue Ala-142. Lys-194, Asp-247, Ser-257, Arg-258, and Asn-259 together coordinate sn-glycerol 3-phosphate. Lys-194 (proton acceptor) is an active-site residue. Arg-258 serves as a coordination point for NADPH. 2 residues coordinate NADPH: Val-282 and Glu-284.

The protein belongs to the NAD-dependent glycerol-3-phosphate dehydrogenase family.

The protein resides in the cytoplasm. The catalysed reaction is sn-glycerol 3-phosphate + NAD(+) = dihydroxyacetone phosphate + NADH + H(+). It carries out the reaction sn-glycerol 3-phosphate + NADP(+) = dihydroxyacetone phosphate + NADPH + H(+). It functions in the pathway membrane lipid metabolism; glycerophospholipid metabolism. In terms of biological role, catalyzes the reduction of the glycolytic intermediate dihydroxyacetone phosphate (DHAP) to sn-glycerol 3-phosphate (G3P), the key precursor for phospholipid synthesis. The sequence is that of Glycerol-3-phosphate dehydrogenase [NAD(P)+] from Aeromonas hydrophila subsp. hydrophila (strain ATCC 7966 / DSM 30187 / BCRC 13018 / CCUG 14551 / JCM 1027 / KCTC 2358 / NCIMB 9240 / NCTC 8049).